Here is a 171-residue protein sequence, read N- to C-terminus: Protein-export protein SecB (171 aa).

It belongs to the SecB family. As to quaternary structure, homotetramer, a dimer of dimers. One homotetramer interacts with 1 SecA dimer.

It localises to the cytoplasm. Functionally, one of the proteins required for the normal export of preproteins out of the cell cytoplasm. It is a molecular chaperone that binds to a subset of precursor proteins, maintaining them in a translocation-competent state. It also specifically binds to its receptor SecA. The sequence is that of Protein-export protein SecB from Granulibacter bethesdensis (strain ATCC BAA-1260 / CGDNIH1).